Here is a 187-residue protein sequence, read N- to C-terminus: GTP cyclohydrolase 1 (187 aa).

C78, H81, and C150 together coordinate Zn(2+).

The protein belongs to the GTP cyclohydrolase I family. Homomer.

It carries out the reaction GTP + H2O = 7,8-dihydroneopterin 3'-triphosphate + formate + H(+). Its pathway is cofactor biosynthesis; 7,8-dihydroneopterin triphosphate biosynthesis; 7,8-dihydroneopterin triphosphate from GTP: step 1/1. The chain is GTP cyclohydrolase 1 from Brevibacillus brevis (strain 47 / JCM 6285 / NBRC 100599).